A 423-amino-acid chain; its full sequence is Type II methyltransferase M.NgoBV (423 aa).

The region spanning 4 to 423 (IKFIDLFSGM…AVSERLLHTL (420 aa)) is the SAM-dependent MTase C5-type domain. The active site involves C80.

This sequence belongs to the class I-like SAM-binding methyltransferase superfamily. C5-methyltransferase family.

The catalysed reaction is a 2'-deoxycytidine in DNA + S-adenosyl-L-methionine = a 5-methyl-2'-deoxycytidine in DNA + S-adenosyl-L-homocysteine + H(+). In terms of biological role, a methylase, recognizes the double-stranded sequence 5'-GGNNCC-3', methylates C-5 on both strands, and protects the DNA from cleavage by the NgoBV endonuclease. The polypeptide is Type II methyltransferase M.NgoBV (ngoBVM) (Neisseria gonorrhoeae).